Here is a 72-residue protein sequence, read N- to C-terminus: NAD(P)H-quinone oxidoreductase subunit O (72 aa).

Belongs to the complex I NdhO subunit family. NDH-1 can be composed of about 15 different subunits; different subcomplexes with different compositions have been identified which probably have different functions.

It localises to the cellular thylakoid membrane. The enzyme catalyses a plastoquinone + NADH + (n+1) H(+)(in) = a plastoquinol + NAD(+) + n H(+)(out). It catalyses the reaction a plastoquinone + NADPH + (n+1) H(+)(in) = a plastoquinol + NADP(+) + n H(+)(out). Functionally, NDH-1 shuttles electrons from an unknown electron donor, via FMN and iron-sulfur (Fe-S) centers, to quinones in the respiratory and/or the photosynthetic chain. The immediate electron acceptor for the enzyme in this species is believed to be plastoquinone. Couples the redox reaction to proton translocation, and thus conserves the redox energy in a proton gradient. Cyanobacterial NDH-1 also plays a role in inorganic carbon-concentration. This chain is NAD(P)H-quinone oxidoreductase subunit O, found in Synechococcus elongatus (strain ATCC 33912 / PCC 7942 / FACHB-805) (Anacystis nidulans R2).